The sequence spans 350 residues: Putative aminopeptidase MJ0555 (350 aa).

His62 and Asp175 together coordinate a divalent metal cation. The active-site Proton acceptor is the Glu207. Residues Glu208, Asp230, and His321 each contribute to the a divalent metal cation site.

It belongs to the peptidase M42 family. The cofactor is a divalent metal cation.

This chain is Putative aminopeptidase MJ0555, found in Methanocaldococcus jannaschii (strain ATCC 43067 / DSM 2661 / JAL-1 / JCM 10045 / NBRC 100440) (Methanococcus jannaschii).